The sequence spans 290 residues: Endo-1,4-beta-xylanase B (290 aa).

Residues 1 to 19 form the signal peptide; it reads MVSFNSLLVAVSAATCALA. N-linked (GlcNAc...) asparagine glycosylation is present at Asn-26. The 189-residue stretch at 34-222 folds into the GH11 domain; that stretch reads QSTPAGTGTN…SSGSSTVTVN (189 aa). The active-site Nucleophile is Glu-118. The active-site Proton donor is Glu-209. The tract at residues 223–248 is disordered; it reads PAGGVTSPIAPTGPSSVSTTPSGPSS. A compositionally biased stretch (low complexity) spans 234–248; that stretch reads TGPSSVSTTPSGPSS. The CBM1 domain occupies 255–290; it reads TCSALYGQCGGQGWTGPTCCSSGTCKFSNNWYSQCL.

It belongs to the glycosyl hydrolase 11 (cellulase G) family.

It localises to the secreted. It carries out the reaction Endohydrolysis of (1-&gt;4)-beta-D-xylosidic linkages in xylans.. It functions in the pathway glycan degradation; xylan degradation. Functionally, endo-1,4-beta-xylanase involved in the hydrolysis of xylan, a major structural heterogeneous polysaccharide found in plant biomass representing the second most abundant polysaccharide in the biosphere, after cellulose. The sequence is that of Endo-1,4-beta-xylanase B (xynB) from Phanerodontia chrysosporium (White-rot fungus).